Reading from the N-terminus, the 523-residue chain is Factor arrest protein 8 (523 aa).

The stretch at 26–76 forms a coiled coil; the sequence is TKNERDRITWELERSEMKARIAELEGENRDLKHQLNQIQSKAVSPEGEKEE. The segment at 61 to 80 is disordered; that stretch reads NQIQSKAVSPEGEKEEKHVP. Residues 71-80 are compositionally biased toward basic and acidic residues; sequence EGEKEEKHVP. The residue at position 115 (Ser-115) is a Phosphoserine. Residue Thr-132 is modified to Phosphothreonine. A disordered region spans residues 150–171; the sequence is ALLDTKPNPKQGPSESPSPTKV. The segment covering 160-171 has biased composition (polar residues); sequence QGPSESPSPTKV.

As to quaternary structure, component of a complex at least composed of FAR3, FAR7, FAR8, FAR10, FAR11 and VPS64.

It is found in the cytoplasm. Its subcellular location is the endoplasmic reticulum. In terms of biological role, participates in the control of the reentry into the cell cycle following pheromone treatment. This is Factor arrest protein 8 (FAR8) from Saccharomyces cerevisiae (strain ATCC 204508 / S288c) (Baker's yeast).